We begin with the raw amino-acid sequence, 462 residues long: Flavin-containing monooxygenase FMO GS-OX3 (462 aa).

17-22 (GAGPAG) provides a ligand contact to FAD. 212 to 217 (GNFASG) is an NADP(+) binding site. Residues 318 to 338 (ALAPGLAFVGLPAMGIVFVMF) traverse the membrane as a helical segment.

The protein belongs to the FMO family.

It is found in the membrane. The enzyme catalyses a (Z)-omega-(methylsulfanyl)-N-sulfo-alkylhydroximate S-glucoside + NADPH + O2 + H(+) = a (Z)-omega-(methylsulfinyl)-alkyl-glucosinolate + NADP(+) + H2O. In terms of biological role, catalyzes the conversion of methylthioalkyl glucosinolates of any chain length into methylsulfinylalkyl glucosinolates. Prefers probably short-chain methylthioalkyl glucosinolates in cv. Landsberg erecta. The chain is Flavin-containing monooxygenase FMO GS-OX3 (FMOGS-OX3) from Arabidopsis thaliana (Mouse-ear cress).